Consider the following 408-residue polypeptide: UDP-N-acetylglucosamine--N-acetylmuramyl-(pentapeptide) pyrophosphoryl-undecaprenol N-acetylglucosamine transferase (408 aa).

The disordered stretch occupies residues 1-20; the sequence is MNDTVKKPTGGRGDDPLPAG. UDP-N-acetyl-alpha-D-glucosamine-binding positions include 41 to 43, Asn160, Arg197, Ser231, and Gln327; that span reads TAG.

It belongs to the glycosyltransferase 28 family. MurG subfamily.

It localises to the cell membrane. The catalysed reaction is di-trans,octa-cis-undecaprenyl diphospho-N-acetyl-alpha-D-muramoyl-L-alanyl-D-glutamyl-meso-2,6-diaminopimeloyl-D-alanyl-D-alanine + UDP-N-acetyl-alpha-D-glucosamine = di-trans,octa-cis-undecaprenyl diphospho-[N-acetyl-alpha-D-glucosaminyl-(1-&gt;4)]-N-acetyl-alpha-D-muramoyl-L-alanyl-D-glutamyl-meso-2,6-diaminopimeloyl-D-alanyl-D-alanine + UDP + H(+). Its pathway is cell wall biogenesis; peptidoglycan biosynthesis. In terms of biological role, cell wall formation. Catalyzes the transfer of a GlcNAc subunit on undecaprenyl-pyrophosphoryl-MurNAc-pentapeptide (lipid intermediate I) to form undecaprenyl-pyrophosphoryl-MurNAc-(pentapeptide)GlcNAc (lipid intermediate II). The chain is UDP-N-acetylglucosamine--N-acetylmuramyl-(pentapeptide) pyrophosphoryl-undecaprenol N-acetylglucosamine transferase from Mycobacterium avium (strain 104).